The sequence spans 275 residues: MTSTPIERAVYIVSDSTGITAETFSHSVLSQFDEVNFKPVRLPFIDTLDKAREVVARINRNALEAGVPPIVFSTLVNPEILALVRQSNGVFLDLFGTFVSHIEQALGLKSSHSIGRSHMAANSEKYRNRIDAINFSLAHDDGQFVNQLDQADVILVGVSRCGKTPTSLYLAMQYAVKAANFPLTPDDFERGALPKTIAPYRGKLFGLSIQPERLAEVRNERRPNSHYARLEQCRYEVAEAERMMRREGISWLSTTTKSIEEIATTVLQEVGLERV.

Position 157 to 164 (157 to 164) interacts with ADP; it reads GVSRCGKT.

It belongs to the pyruvate, phosphate/water dikinase regulatory protein family. PSRP subfamily.

It catalyses the reaction [pyruvate, water dikinase] + ADP = [pyruvate, water dikinase]-phosphate + AMP + H(+). The enzyme catalyses [pyruvate, water dikinase]-phosphate + phosphate + H(+) = [pyruvate, water dikinase] + diphosphate. Its function is as follows. Bifunctional serine/threonine kinase and phosphorylase involved in the regulation of the phosphoenolpyruvate synthase (PEPS) by catalyzing its phosphorylation/dephosphorylation. The sequence is that of Putative phosphoenolpyruvate synthase regulatory protein from Bordetella bronchiseptica (strain ATCC BAA-588 / NCTC 13252 / RB50) (Alcaligenes bronchisepticus).